The primary structure comprises 490 residues: Colicin-5 (490 aa).

The span at 1-20 (MDKVTDNSPDVESTESTEGS) shows a compositional bias: polar residues. 2 disordered regions span residues 1 to 29 (MDKVTDNSPDVESTESTEGSFPTVGVDTG) and 146 to 171 (QKAREEAEAAEKALREAERQRDEIAR). Residues 146-170 (QKAREEAEAAEKALREAERQRDEIA) are compositionally biased toward basic and acidic residues. Residues 447-467 (IVALMFSFIVGVPLGFWGIAI) traverse the membrane as a helical segment.

It belongs to the channel forming colicin family.

Its subcellular location is the host membrane. In terms of biological role, this colicin is a channel-forming colicin. This class of transmembrane toxins depolarize the cytoplasmic membrane, leading to dissipation of cellular energy. Colicins are polypeptide toxins produced by and active against E.coli and closely related bacteria. In Escherichia coli, this protein is Colicin-5 (cfa).